A 582-amino-acid chain; its full sequence is Vesicular glutamate transporter 2 (582 aa).

Topologically, residues 1 to 71 (MESVKQRILA…CTCFGLPRRY (71 aa)) are cytoplasmic. A helical transmembrane segment spans residues 72-92 (IIAIMSGLGFCISFGIRCNLG). Over 93-125 (VAIVDMVNNSTIHRGGKVIKEKAKFNWDPETVG) the chain is Vesicular. 2 N-linked (GlcNAc...) asparagine glycosylation sites follow: Asn100 and Asn101. Residues 126-146 (MIHGSFFWGYIITQIPGGYIA) traverse the membrane as a helical segment. The Cytoplasmic portion of the chain corresponds to 147-148 (SR). A helical transmembrane segment spans residues 149 to 169 (LAANRVFGAAILLTSTLNMLI). At 170 to 177 (PSAARVHY) the chain is on the vesicular side. A helical membrane pass occupies residues 178-198 (GCVIFVRILQGLVEGVTYPAC). Residues 199–216 (HGIWSKWAPPLERSRLAT) lie on the Cytoplasmic side of the membrane. The helical transmembrane segment at 217-237 (TSFCGSYAGAVIAMPLAGILV) threads the bilayer. The Vesicular segment spans residues 238–244 (QYTGWSS). Residues 245–265 (VFYVYGSFGMVWYMFWLLVSY) form a helical membrane-spanning segment. The Cytoplasmic portion of the chain corresponds to 266 to 310 (ESPAKHPTITDEERRYIEESIGESANLLGAMEKFKTPWRKFFTSM). The chain crosses the membrane as a helical span at residues 311–331 (PVYAIIVANFCRSWTFYLLLI). Residues 332–349 (SQPAYFEEVFGFEISKVG) lie on the Vesicular side of the membrane. Residues 350-370 (MLSAVPHLVMTIIVPIGGQIA) form a helical membrane-spanning segment. The Cytoplasmic portion of the chain corresponds to 371 to 386 (DFLRSKQILSTTTVRK). The helical transmembrane segment at 387 to 407 (IMNCGGFGMEATLLLVVGYSH) threads the bilayer. Residues 408-409 (TR) are Vesicular-facing. The chain crosses the membrane as a helical span at residues 410 to 430 (GVAISFLVLAVGFSGFAISGF). Residues 431-443 (NVNHLDIAPRYAS) lie on the Cytoplasmic side of the membrane. A helical membrane pass occupies residues 444–464 (ILMGISNGVGTLSGMVCPIIV). At 465–477 (GAMTKNKSREEWQ) the chain is on the vesicular side. The N-linked (GlcNAc...) asparagine glycan is linked to Asn470. The chain crosses the membrane as a helical span at residues 478–498 (YVFLIAALVHYGGVIFYAIFA). Over 499 to 582 (SGEKQPWADP…HSYKDRVDYS (84 aa)) the chain is Cytoplasmic.

Belongs to the major facilitator superfamily. Sodium/anion cotransporter family. VGLUT subfamily. In terms of tissue distribution, predominantly expressed in adult brain. Expressed in amygdala, caudate nucleus, cerebral cortex, frontal lobe, hippocampus, medulla, occipital lobe, putamen, spinal cord, substantia nigra, subthalamic nucleus, temporal lobe and thalamus.

Its subcellular location is the cytoplasmic vesicle. The protein resides in the secretory vesicle. It is found in the synaptic vesicle membrane. The protein localises to the synapse. It localises to the synaptosome. Its subcellular location is the cell membrane. It catalyses the reaction L-glutamate(out) = L-glutamate(in). The catalysed reaction is 3 Na(+)(out) + phosphate(out) = 3 Na(+)(in) + phosphate(in). It carries out the reaction phosphate(in) = phosphate(out). The enzyme catalyses K(+)(in) + H(+)(out) = K(+)(out) + H(+)(in). It catalyses the reaction chloride(in) = chloride(out). With respect to regulation, chloride channel activity is allosterically activated by lumenal H(+) and Cl(-) leading to synaptic vesicles acidification. The L-glutamate transport activity is allosterically activated by lumenal H(+) and Cl(-). The allosteric requirement for H(+) efficiently prevents non-vesicular efflux across the plasma membrane. The L-glutamate uniporter activity exhibits a biphasic dependence on chloride concentration. In terms of biological role, multifunctional transporter that transports L-glutamate as well as multiple ions such as chloride, proton, potassium, sodium and phosphate. At the synaptic vesicle membrane, mainly functions as a uniporter which transports preferentially L-glutamate but also, phosphate from the cytoplasm into synaptic vesicles at presynaptic nerve terminals of excitatory neural cells. The L-glutamate or phosphate uniporter activity is electrogenic and is driven by the proton electrochemical gradient, mainly by the electrical gradient established by the vacuolar H(+)-ATPase across the synaptic vesicle membrane. In addition, functions as a chloride channel that allows the chloride permeation through the synaptic vesicle membrane therefore affects the proton electrochemical gradient and promotes synaptic vesicles acidification. Moreover, functions as a vesicular K(+)/H(+) antiport allowing to maintain the electrical gradient and to decrease chemical gradient and therefore sustain vesicular glutamate uptake. The vesicular H(+)/H(+) antiport activity is electroneutral. At the plasma membrane, following exocytosis, functions as a symporter of Na(+) and phosphate from the extracellular space to the cytoplasm allowing synaptic phosphate homeostasis regulation. The symporter activity is driven by an inside negative membrane potential and is electrogenic. Also involved in the regulation of retinal hyaloid vessel regression during postnatal development. May also play a role in the endocrine glutamatergic system of other tissues such as pineal gland and pancreas. The protein is Vesicular glutamate transporter 2 of Homo sapiens (Human).